The primary structure comprises 148 residues: MKLDLKILDARMRDQLPAYATTGSAGLDLRACLDEPLTLKPGETALVPTGLAIHVGDPGYAALILPRSGLGHKHGIVLGNLVGLIDSDYQGQLMISTWNRGETTFVLNPMERLAQLVIVPVVQAEFNIVDDFETSERGAGGFGSTGKH.

Residues 67 to 69 (RSG), Asn-80, 84 to 86 (LID), and Met-94 contribute to the substrate site.

This sequence belongs to the dUTPase family. Mg(2+) is required as a cofactor.

It catalyses the reaction dUTP + H2O = dUMP + diphosphate + H(+). It participates in pyrimidine metabolism; dUMP biosynthesis; dUMP from dCTP (dUTP route): step 2/2. Its function is as follows. This enzyme is involved in nucleotide metabolism: it produces dUMP, the immediate precursor of thymidine nucleotides and it decreases the intracellular concentration of dUTP so that uracil cannot be incorporated into DNA. The sequence is that of Deoxyuridine 5'-triphosphate nucleotidohydrolase from Paraburkholderia xenovorans (strain LB400).